The sequence spans 624 residues: MSPTAAPQKLSKVEDLKARSQYLLEPILSQLQEESTHFNEDGIQILKFHGSYQQDNRDNRVKGQEKDFQFMLRLRSPGGYIPPQLYLTLDQLADDYGNGTLRATTRQAFQLHGILKRDLKTVIRRIVENLGSTISACGDVNRNVMAPPAPFRDRPEYEWARTYANNIADLLTPESGAYYELWLDGEKVLSGEPDPAVLAARRNPKGRVADSVEPLYSDRYLPRKFKIAVTVPGDNSIDLFTQDIGLVVIGNDRGELEGFNVYVGGGMGRTHNKEETFARLADPLGFVPAADIYAAVQAIVATQRDYGDRSNRRHARMKYLIHDWGIAKFKEAVESVFGKAIAPVRELPPFRYRDYLGWHEQGDGKWFLGLPITSGRIKDDGNWQLRSALREIVSRWQLPLLLTGSQDVLIYDVQPGDRAAIDKLLRDRGVHTVEAIDSLQRYAMACPALPTCGLAITESERALPGLLVRIRRLLEEQGLPDEHFVVRMTGCPNGCARPYMAELAFVGSAPNTYQLWLGGSPDQTRLARPFIDRLADGDVETQLRPLFVFFKQSRQAGESFGDFCDRVGFDALRQFSESYQHEAAKPRYRVGLRADVHGRLKAEADKRGVSLTDLACEAIAAYLR.

A cross-link (3'-(S-cysteinyl)-tyrosine (Tyr-Cys)) is located at residues 52 to 137; that stretch reads YQQDNRDNRV…ENLGSTISAC (86 aa). 4 residues coordinate [4Fe-4S] cluster: Cys446, Cys452, Cys491, and Cys495. Cys495 serves as a coordination point for siroheme.

The protein belongs to the nitrite and sulfite reductase 4Fe-4S domain family. Monomer. Siroheme serves as cofactor. [4Fe-4S] cluster is required as a cofactor.

The enzyme catalyses hydrogen sulfide + 6 oxidized [2Fe-2S]-[ferredoxin] + 3 H2O = sulfite + 6 reduced [2Fe-2S]-[ferredoxin] + 7 H(+). Its function is as follows. Catalyzes the reduction of sulfite to sulfide, a step in the biosynthesis of sulfur-containing amino acids and cofactors. The chain is Sulfite reductase [ferredoxin] (sir) from Synechococcus elongatus (strain ATCC 33912 / PCC 7942 / FACHB-805) (Anacystis nidulans R2).